A 151-amino-acid chain; its full sequence is 3-hydroxyacyl-[acyl-carrier-protein] dehydratase FabZ (151 aa).

His57 is an active-site residue.

Belongs to the thioester dehydratase family. FabZ subfamily.

It localises to the cytoplasm. It carries out the reaction a (3R)-hydroxyacyl-[ACP] = a (2E)-enoyl-[ACP] + H2O. In terms of biological role, involved in unsaturated fatty acids biosynthesis. Catalyzes the dehydration of short chain beta-hydroxyacyl-ACPs and long chain saturated and unsaturated beta-hydroxyacyl-ACPs. This chain is 3-hydroxyacyl-[acyl-carrier-protein] dehydratase FabZ, found in Tolumonas auensis (strain DSM 9187 / NBRC 110442 / TA 4).